The following is a 292-amino-acid chain: MQLENIEILENHSLAPYAYTQAGGLVDYLAIPKSIHELKVLVNWAKELGMPVQVFGRLSNLIVRNGGLRGLSILLHDLRDVVVDQNKIVASAGADLIWVTEQAFEHGLSGLEWGAGIPGSVGGAVFMNAGAYGGQVDMVVSSVTALMPDGTLQNFEKKALEFGYRKSVFQSNGGIIISATFELQPDSCTAIRTRMDENNFKRANKQPLNYPSNGSVFKRPEGYFAGKLIMDSKLQGVRRGGVEVSKKHAGFMVNIAHGTGNDYEDLIHYVQKTVYEKFGVHLETEVRIMGER.

In terms of domain architecture, FAD-binding PCMH-type spans 21 to 186 (QAGGLVDYLA…ISATFELQPD (166 aa)). Arg-165 is a catalytic residue. The active-site Proton donor is the Ser-215. Glu-285 is an active-site residue.

Belongs to the MurB family. FAD is required as a cofactor.

The protein resides in the cytoplasm. The enzyme catalyses UDP-N-acetyl-alpha-D-muramate + NADP(+) = UDP-N-acetyl-3-O-(1-carboxyvinyl)-alpha-D-glucosamine + NADPH + H(+). The protein operates within cell wall biogenesis; peptidoglycan biosynthesis. In terms of biological role, cell wall formation. The polypeptide is UDP-N-acetylenolpyruvoylglucosamine reductase (Leuconostoc mesenteroides subsp. mesenteroides (strain ATCC 8293 / DSM 20343 / BCRC 11652 / CCM 1803 / JCM 6124 / NCDO 523 / NBRC 100496 / NCIMB 8023 / NCTC 12954 / NRRL B-1118 / 37Y)).